A 118-amino-acid polypeptide reads, in one-letter code: Thioredoxin AMT13 (118 aa).

The 110-residue stretch at 1 to 110 (MSDNKAIQTL…LEDAIRANLG (110 aa)) folds into the Thioredoxin domain. Cys-36 and Cys-39 form a disulfide bridge.

The protein belongs to the thioredoxin family.

It participates in mycotoxin biosynthesis. Its function is as follows. Thioredoxin; part of the gene clusters that mediate the biosynthesis of AM-toxins, host-selective toxins (HSTs) causing Alternaria blotch on apple, a worldwide distributed disease. AM-toxins are cyclic depsipeptides containing the 3 residues 2-hydroxy-isovaleric acid (2-HIV), dehydroalanine, L-alanine which are common for all 3 AM-toxins I to III. The fourth precursor is L-alpha-amino-methoxyphenyl-valeric acid (L-Amv) for AM-toxin I, L-alpha-amino-phenyl-valeric acid (L-Apv) for AM-toxin II, and L-alpha-amino-hydroxyphenyl-valeric acid (L-Ahv) for AM-toxin III. AM-toxins have two target sites for affecting susceptible apple cells; they cause invagination of the plasma membrane and electrolyte loss and chloroplast disorganization. The non-ribosomal peptide synthetase AMT1 contains 4 catalytic modules and is responsible for activation of each residue in AM-toxin. The aldo-keto reductase AMT2 catalyzes the conversion of 2-keto-isovaleric acid (2-KIV) to 2-hydroxy-isovaleric acid (2-HIV), one of the precursor residues incorporated by AMT1 during AM-toxin biosynthesis, by reduction of its ketone to an alcohol. The cytochrome P450 monooxygenase AMT3 and the thioesterase AMT4 are also important for AM-toxin production, but their exact function within the AM-toxin biosynthesis are not known yet. Up to 21 proteins (including AMT1 to AMT4) are predicted to be involved in AM-toxin biosynthesis since their expression ishighly up-regulated in AM-toxin-producing cultures. The sequence is that of Thioredoxin AMT13 from Alternaria alternata (Alternaria rot fungus).